The sequence spans 657 residues: LIM and SH3 domain protein Lasp (657 aa).

Positions 3–63 (KTCARCQKVV…EAHIPKAKAT (61 aa)) constitute an LIM zinc-binding domain. Nebulin repeat units lie at residues 64-95 (AIAD…KAKG) and 96-130 (KFTQ…KKAA). Disordered stretches follow at residues 130–151 (AMEK…EYFS), 164–223 (PTAS…PIQH), 235–257 (YQQL…QLHD), 294–318 (LYPT…QQQA), 332–415 (NSHH…SAAS), and 460–528 (KQHA…PKRI). Over residues 140–150 (VSDSSNESEYF) the composition is skewed to polar residues. Low complexity-rich tracts occupy residues 172–215 (AATT…QQQT) and 236–254 (QQLQ…QQQQ). Polar residues predominate over residues 332-341 (NSHHPSGNSV). The segment covering 342-357 (DQYDQPQQQQHQPQQQ) has biased composition (low complexity). Polar residues predominate over residues 358 to 370 (STNPTLVAAQQQQ). Positions 371–403 (SHHSLLNNNASNGGISHSHHSNINNNGHGSQNQ) are enriched in low complexity. Over residues 460-475 (KQHASNGHMPNQQQQH) the composition is skewed to polar residues. Ser505 and Ser530 each carry phosphoserine. The segment at 548 to 592 (EQAHQQQKHQQYYQQVQMMQQQEHPPQQQQMRQQPSYSSLQEKQS) is disordered. Residues 549-586 (QAHQQQKHQQYYQQVQMMQQQEHPPQQQQMRQQPSYSS) are compositionally biased toward low complexity. The SH3 domain maps to 596–657 (TAMRVYRAIY…PANYVEQAVI (62 aa)).

As to quaternary structure, interacts with osk.

The polypeptide is LIM and SH3 domain protein Lasp (Drosophila melanogaster (Fruit fly)).